Consider the following 519-residue polypeptide: LysM domain-containing protein ARB_03442 (519 aa).

A signal peptide spans 1–19; the sequence is MGQLKQLAGILALASPAIA. N-linked (GlcNAc...) asparagine glycosylation occurs at Asn47. Positions 312-358 constitute a LysM domain; the sequence is KYYNVVAGDTCASISSEFEVTMDELLTYNPELHPNCENLWANFAICV. Residues 314–358 are lysM domain; it reads YNVVAGDTCASISSEFEVTMDELLTYNPELHPNCENLWANFAICV. The segment covering 407 to 416 has biased composition (low complexity); the sequence is PDAPDAQGQT. A disordered region spans residues 407-458; sequence PDAPDAQGQTVHDDEPPEEPHIEEPPKDIPAGDDDDRKKAKLPLPSGKYPLP. Residues 417–433 show a composition bias toward basic and acidic residues; the sequence is VHDDEPPEEPHIEEPPK. Asn460 is a glycosylation site (N-linked (GlcNAc...) asparagine). Residues 467-510 enclose the Chitin-binding type-1 domain; the sequence is DGSCNEYISCVGSPFGVCCSTSGWCGYGKPWCGVGNCVSGYCDT. Disulfide bonds link Cys470-Cys485, Cys476-Cys491, Cys484-Cys498, and Cys503-Cys508.

The protein localises to the secreted. Might have a role in sequestration of chitin oligosaccharides (breakdown products of fungal cell walls that are released during invasion and act as triggers of host immunity) to dampen host defense. This is LysM domain-containing protein ARB_03442 from Arthroderma benhamiae (strain ATCC MYA-4681 / CBS 112371) (Trichophyton mentagrophytes).